A 282-amino-acid chain; its full sequence is D-arabinitol 2-dehydrogenase [ribulose-forming] (282 aa).

Leu32 and Asn53 together coordinate NADP(+). Catalysis depends on Ser170, which acts as the Proton donor. NADP(+)-binding residues include Tyr185, Lys189, Ile218, and Thr220. The active-site Proton acceptor is the Tyr185. The active-site Lowers pKa of active site Tyr is the Lys189.

The protein belongs to the short-chain dehydrogenases/reductases (SDR) family.

The catalysed reaction is D-arabinitol + NAD(+) = D-ribulose + NADH + H(+). Its pathway is carbohydrate metabolism; D-arabinitol metabolism. In terms of biological role, catalyzes the NAD(+)-dependent oxidation of D-arabinitol at carbon 4 to produce D-ribulose. This is D-arabinitol 2-dehydrogenase [ribulose-forming] (ARD) from Candida tropicalis (Yeast).